A 37-amino-acid chain; its full sequence is Cytochrome b6-f complex subunit 5 (37 aa).

The helical transmembrane segment at 5–25 (LLSGIVLGLIPITLAGLFVTA) threads the bilayer.

This sequence belongs to the PetG family. As to quaternary structure, the 4 large subunits of the cytochrome b6-f complex are cytochrome b6, subunit IV (17 kDa polypeptide, PetD), cytochrome f and the Rieske protein, while the 4 small subunits are PetG, PetL, PetM and PetN. The complex functions as a dimer.

The protein localises to the plastid. It localises to the chloroplast thylakoid membrane. In terms of biological role, component of the cytochrome b6-f complex, which mediates electron transfer between photosystem II (PSII) and photosystem I (PSI), cyclic electron flow around PSI, and state transitions. PetG is required for either the stability or assembly of the cytochrome b6-f complex. This chain is Cytochrome b6-f complex subunit 5, found in Zygnema circumcarinatum (Green alga).